The chain runs to 795 residues: RAS guanyl-releasing protein 1 (795 aa).

Residues 1–12 (MGTLGKAREAPR) show a composition bias toward basic and acidic residues. Positions 1–37 (MGTLGKAREAPRKPCHGSRAGPKARLEAKSTNSPLPA) are disordered. Residues 53 to 176 (LGHLAKGASL…HLIDTTQINS (124 aa)) enclose the N-terminal Ras-GEF domain. The segment at 57 to 110 (AKGASLDDLIDSCIQSFDADGNLCRNNQLLQVMLTMHRIIISSAELLQKVMNLY) is ras exchanger motif region; required for transforming activity. Thr-184 carries the post-translational modification Phosphothreonine; by PKC. Residues 205–436 (EPEELSEHLT…YELSYAREPR (232 aa)) form the Ras-GEF domain. 2 consecutive EF-hand domains span residues 470–505 (HVQR…FPFS) and 506–532 (FCVM…ASSI). Asp-483, Asp-485, Asp-487, Tyr-489, and Glu-494 together coordinate Ca(2+). Residues 541–591 (PHNFQETTYLKPTFCDNCAGFLWGVIKQGYRCKDCGMNCHKQCKDLVVFEC) form a Phorbol-ester/DAG-type zinc finger. Ser-597 bears the Phosphoserine mark. The tract at residues 686–694 (TPGHFVLSS) is suppress the PT region-mediated translocation to plasma membrane. A PT region; mediates the BCR-dependent translocation to plasma membrane region spans residues 717 to 795 (LVRKRAFVKW…LAQMDHGDSA (79 aa)). Residues 738 to 779 (ELHLRLRTYQELEQEINTLKADNDALKIQLKYAQKKIESLQL) adopt a coiled-coil conformation.

Belongs to the RASGRP family. As to quaternary structure, homodimer. Forms a signaling complex with DGKZ and HRAS. Interacts with F-actin. Interacts with SKAP1. Detected in spleen and thymus. Expressed by mature thymocytes and to a lower extent by bone marrow-derived mast cells (at protein level). Detected in B-cells and keratinocytes (at protein level).

It is found in the cytoplasm. The protein localises to the cytosol. It localises to the cell membrane. The protein resides in the golgi apparatus membrane. Its subcellular location is the endoplasmic reticulum membrane. Autoinhibited. Activated by diacylglycerol and calcium binding, which induces a conformational change releasing the autoinhibitory state. Regulated by DGKA. Regulated by DGKZ. Regulated by PLC gamma and F-actin polymerization. Functionally, functions as a calcium- and diacylglycerol (DAG)-regulated nucleotide exchange factor specifically activating Ras through the exchange of bound GDP for GTP. Activates the Erk/MAP kinase cascade. Regulates T-cell/B-cell development, homeostasis and differentiation by coupling T-lymphocyte/B-lymphocyte antigen receptors to Ras. Regulates NK cell cytotoxicity and ITAM-dependent cytokine production by activation of Ras-mediated ERK and JNK pathways. Functions in mast cell degranulation and cytokine secretion, regulating FcERI-evoked allergic responses. May also function in differentiation of other cell types. Proto-oncogene, which promotes T-cell lymphomagenesis when its expression is deregulated. The chain is RAS guanyl-releasing protein 1 (Rasgrp1) from Mus musculus (Mouse).